The sequence spans 167 residues: UPF0179 protein Pisl_0688 (167 aa).

Belongs to the UPF0179 family.

The chain is UPF0179 protein Pisl_0688 from Pyrobaculum islandicum (strain DSM 4184 / JCM 9189 / GEO3).